Consider the following 358-residue polypeptide: tRNA-specific 2-thiouridylase MnmA (358 aa).

Residues 6-13 and Met32 contribute to the ATP site; that span reads ALSGGVDS. Catalysis depends on Cys103, which acts as the Nucleophile. A disulfide bridge links Cys103 with Cys201. Gly127 contributes to the ATP binding site. Positions 151–153 are interaction with tRNA; that stretch reads KDQ. The active-site Cysteine persulfide intermediate is the Cys201.

Belongs to the MnmA/TRMU family.

It localises to the cytoplasm. The enzyme catalyses S-sulfanyl-L-cysteinyl-[protein] + uridine(34) in tRNA + AH2 + ATP = 2-thiouridine(34) in tRNA + L-cysteinyl-[protein] + A + AMP + diphosphate + H(+). In terms of biological role, catalyzes the 2-thiolation of uridine at the wobble position (U34) of tRNA, leading to the formation of s(2)U34. The polypeptide is tRNA-specific 2-thiouridylase MnmA (Thermotoga sp. (strain RQ2)).